We begin with the raw amino-acid sequence, 272 residues long: Prohibitin 1 (272 aa).

The stretch at 177–211 (KEFTEAVEMKQVAQQEAERARFIVEKAEQQKKAAV) forms a coiled coil.

As to quaternary structure, the mitochondrial prohibitin complex consists of two subunits (PHB1 and PHB2), assembled into a membrane-associated ring-shaped supercomplex of approximately 1 mDa.

It localises to the mitochondrion inner membrane. The protein localises to the nucleus. The protein resides in the cytoplasm. Its subcellular location is the cell membrane. Its function is as follows. Protein with pleiotropic attributes mediated in a cell-compartment- and tissue-specific manner, which include the plasma membrane-associated cell signaling functions, mitochondrial chaperone, and transcriptional co-regulator of transcription factors in the nucleus. In the mitochondria, together with PHB2, forms large ring complexes (prohibitin complexes) in the inner mitochondrial membrane (IMM) and functions as a chaperone protein that stabilizes mitochondrial respiratory enzymes and maintains mitochondrial integrity in the IMM, which is required for mitochondrial morphogenesis, neuronal survival, and normal lifespan. Functionally, in the nucleus, acts as a transcription coregulator, enhances promoter binding by TP53, a transcription factor it activates, but reduces the promoter binding by E2F1, a transcription factor it represses. In terms of biological role, in the plasma membrane, cooperates with CD86 to mediate CD86-signaling in B lymphocytes that regulates the level of IgG1 produced through the activation of distal signaling intermediates. Upon CD40 engagement, required to activate NF-kappa-B signaling pathway via phospholipase C and protein kinase C activation. The protein is Prohibitin 1 (PHB1) of Gallus gallus (Chicken).